The chain runs to 865 residues: Leucine--tRNA ligase (865 aa).

A 'HIGH' region motif is present at residues 58-68 (PYPSGNLHMGH). Positions 629-633 (KMSKS) match the 'KMSKS' region motif. Residue Lys-632 coordinates ATP.

It belongs to the class-I aminoacyl-tRNA synthetase family.

The protein localises to the cytoplasm. The enzyme catalyses tRNA(Leu) + L-leucine + ATP = L-leucyl-tRNA(Leu) + AMP + diphosphate. The sequence is that of Leucine--tRNA ligase from Synechococcus sp. (strain ATCC 27144 / PCC 6301 / SAUG 1402/1) (Anacystis nidulans).